The sequence spans 178 residues: Napin-B (178 aa).

The first 21 residues, 1–21 (MANKLFLVSATLAFFFLLTNA), serve as a signal peptide directing secretion. 2 consecutive propeptides follow at residues 22 to 38 (SIYRTVVEFDEDDATNP) and 75 to 94 (PSWTLDGEFDFEDDMENPQG).

It belongs to the 2S seed storage albumins family. As to quaternary structure, the mature protein consists of a small and a large chain linked by disulfide bonds. In terms of tissue distribution, cotyledons and the axis.

Functionally, the small, basic, water-soluble napins are one of the two major kinds of storage proteins synthesized in the seed during its maturation. The protein is Napin-B (NAPB) of Brassica napus (Rape).